The chain runs to 173 residues: CDP-archaeol synthase (173 aa).

A run of 5 helical transmembrane segments spans residues 15-35 (GLWFILPAYIANLSACLFGGG), 59-79 (GFIVGVLAGAVVGLGEGLVVG), 84-104 (AGDGFILGLGAMAGDAVGSFV), 118-138 (VLDQLDFFVGAVLLYYLVYGW), and 142-162 (GWVLVGLAILTLALHWLTNVI).

It belongs to the CDP-archaeol synthase family. Mg(2+) is required as a cofactor.

It localises to the cell membrane. The enzyme catalyses 2,3-bis-O-(geranylgeranyl)-sn-glycerol 1-phosphate + CTP + H(+) = CDP-2,3-bis-O-(geranylgeranyl)-sn-glycerol + diphosphate. Its pathway is membrane lipid metabolism; glycerophospholipid metabolism. Catalyzes the formation of CDP-2,3-bis-(O-geranylgeranyl)-sn-glycerol (CDP-archaeol) from 2,3-bis-(O-geranylgeranyl)-sn-glycerol 1-phosphate (DGGGP) and CTP. This reaction is the third ether-bond-formation step in the biosynthesis of archaeal membrane lipids. The sequence is that of CDP-archaeol synthase from Methanopyrus kandleri (strain AV19 / DSM 6324 / JCM 9639 / NBRC 100938).